A 226-amino-acid polypeptide reads, in one-letter code: Ribosomal RNA small subunit methyltransferase G (226 aa).

Residues G95, L100, 146 to 147, and R159 each bind S-adenosyl-L-methionine; that span reads VE.

This sequence belongs to the methyltransferase superfamily. RNA methyltransferase RsmG family.

The protein localises to the cytoplasm. The catalysed reaction is guanosine(527) in 16S rRNA + S-adenosyl-L-methionine = N(7)-methylguanosine(527) in 16S rRNA + S-adenosyl-L-homocysteine. Specifically methylates the N7 position of guanine in position 527 of 16S rRNA. The chain is Ribosomal RNA small subunit methyltransferase G from Acidovorax ebreus (strain TPSY) (Diaphorobacter sp. (strain TPSY)).